A 526-amino-acid polypeptide reads, in one-letter code: tRNA-2-methylthio-N(6)-dimethylallyladenosine synthase (526 aa).

The interval 1-24 (MTQQLNHAKVNQHPGQATLPETAE) is disordered. Residues 28 to 144 (RTYEVKTYGC…LPTLLQRAEH (117 aa)) enclose the MTTase N-terminal domain. 6 residues coordinate [4Fe-4S] cluster: Cys-37, Cys-73, Cys-107, Cys-181, Cys-185, and Cys-188. In terms of domain architecture, Radical SAM core spans 167–403 (RESAYAGWVS…MVVQEQVCEE (237 aa)). The TRAM domain maps to 406-477 (QKLIGTTVEL…PFFLIADSGV (72 aa)).

It belongs to the methylthiotransferase family. MiaB subfamily. As to quaternary structure, monomer. The cofactor is [4Fe-4S] cluster.

The protein localises to the cytoplasm. The enzyme catalyses N(6)-dimethylallyladenosine(37) in tRNA + (sulfur carrier)-SH + AH2 + 2 S-adenosyl-L-methionine = 2-methylsulfanyl-N(6)-dimethylallyladenosine(37) in tRNA + (sulfur carrier)-H + 5'-deoxyadenosine + L-methionine + A + S-adenosyl-L-homocysteine + 2 H(+). In terms of biological role, catalyzes the methylthiolation of N6-(dimethylallyl)adenosine (i(6)A), leading to the formation of 2-methylthio-N6-(dimethylallyl)adenosine (ms(2)i(6)A) at position 37 in tRNAs that read codons beginning with uridine. The chain is tRNA-2-methylthio-N(6)-dimethylallyladenosine synthase from Corynebacterium glutamicum (strain R).